The following is a 329-amino-acid chain: MAGLKGLLFGGILFAMCGGLSEGQKKKEMVLSDKVGQLMDWASKRPVIRMNGDKFRRFIKSPPRNYSVVVMFTALQAHRQCVVCKQADEEYQILANSWRYSSAFTNRIFFAVVDFDEGSDVFQMLNMNSAPTFINFPPKGKPKKGDTYELQVRGFAAEQLARWVADRTDVNIRVIRPPNYAGPLMLGLLLAVIGGLVYLRRSNLDFLNNKTGWALAALCFVLAMTSGQMWNHIRGPPYAHKNPHTNQVNYIHGSSQAQFVAETHIVLLFNGAVTLGMVLLHEAATSDLDVGKRKIMCIAGITLVVIFFSWLLSVFRSKYHGYPYSFLMT.

The first 23 residues, 1-23, serve as a signal peptide directing secretion; it reads MAGLKGLLFGGILFAMCGGLSEG. Residues 24 to 178 are Extracellular-facing; that stretch reads QKKKEMVLSD…DVNIRVIRPP (155 aa). The Thioredoxin domain maps to 41–169; sequence WASKRPVIRM…LARWVADRTD (129 aa). Residue Asn-65 is glycosylated (N-linked (GlcNAc...) asparagine). A disulfide bridge connects residues Cys-81 and Cys-84. A helical transmembrane segment spans residues 179 to 199; that stretch reads NYAGPLMLGLLLAVIGGLVYL. Residues 200-212 are Cytoplasmic-facing; sequence RRSNLDFLNNKTG. Residues 213 to 233 traverse the membrane as a helical segment; it reads WALAALCFVLAMTSGQMWNHI. Residues 234 to 258 are Extracellular-facing; sequence RGPPYAHKNPHTNQVNYIHGSSQAQ. The chain crosses the membrane as a helical span at residues 259–279; it reads FVAETHIVLLFNGAVTLGMVL. Residues 280–294 are Cytoplasmic-facing; that stretch reads LHEAATSDLDVGKRK. The chain crosses the membrane as a helical span at residues 295–315; it reads IMCIAGITLVVIFFSWLLSVF. Residues 316–329 lie on the Extracellular side of the membrane; the sequence is RSKYHGYPYSFLMT.

It belongs to the OST3/OST6 family. In terms of assembly, accessory component of the STT3B-containing form of the oligosaccharyltransferase (OST) complex.

It localises to the cell membrane. The protein localises to the endoplasmic reticulum. Its subcellular location is the endoplasmic reticulum membrane. It participates in protein modification; protein glycosylation. In terms of biological role, accessory component of the STT3B-containing form of the N-oligosaccharyl transferase (OST) complex which catalyzes the transfer of a high mannose oligosaccharide from a lipid-linked oligosaccharide donor to an asparagine residue within an Asn-X-Ser/Thr consensus motif in nascent polypeptide chains. May be involved in substrate-specific N-glycosylation involving acceptor sites that are near cysteine residues. Could indirectly play a role in Mg(2+) transport in epithelial cells. The polypeptide is Dolichyl-diphosphooligosaccharide--protein glycosyltransferase subunit MAGT1 (Xenopus laevis (African clawed frog)).